The sequence spans 241 residues: MEMERINENTIRVVIGNDDLTERGITVLDLLGNHKQIEGFFYSILEEVDVDHQFQDNDAVTFQVLPNRNGLELFISKNTDEDDVADESQGDASVDSEHPDQVSDQIKEHLLEKDNQKDFFSGFKSAANESNDIEDYLNDSGQPTTTRVVKLHSFEDMISLARVLRLENAASNLYRYQDAYYLELVFFVNESSRESIKDELAVAYEYAERTKVAPDVLAEHGQLIMDNSALELTRFHFLGNS.

The tract at residues 77–102 is disordered; it reads KNTDEDDVADESQGDASVDSEHPDQV. Acidic residues predominate over residues 80–89; it reads DEDDVADESQ.

Belongs to the MecA family. In terms of assembly, homodimer.

Its function is as follows. Enables the recognition and targeting of unfolded and aggregated proteins to the ClpC protease or to other proteins involved in proteolysis. The polypeptide is Adapter protein MecA (Levilactobacillus brevis (strain ATCC 367 / BCRC 12310 / CIP 105137 / JCM 1170 / LMG 11437 / NCIMB 947 / NCTC 947) (Lactobacillus brevis)).